The sequence spans 133 residues: Putative biopolymer transport protein ExbD-like 1 (133 aa).

The Cytoplasmic portion of the chain corresponds to 1-15 (MNYDNYWDEDKPELN). Residues 16–32 (ITPLVDVMLVLLAILMV) form a helical membrane-spanning segment. Residues 33 to 133 (TTPTLTYKEE…FLKVSLITSP (101 aa)) are Periplasmic-facing.

The protein belongs to the ExbD/TolR family.

The protein localises to the cell inner membrane. In Helicobacter pylori (strain J99 / ATCC 700824) (Campylobacter pylori J99), this protein is Putative biopolymer transport protein ExbD-like 1.